Here is a 315-residue protein sequence, read N- to C-terminus: Ribosome biogenesis protein BRX1 homolog 1 (315 aa).

Residues 1–35 (MGRKRKHSETVTAAPVKDSAPERPQRTLLGWKDKK) form a disordered region. Residues 19 to 35 (SAPERPQRTLLGWKDKK) are compositionally biased toward basic and acidic residues. A Brix domain is found at 53–256 (EKVLVTCSRR…PIKIFGGSFG (204 aa)).

The protein belongs to the BRX1 family. Expressed in roots, rosette leaves, stems, flowers, siliques and seeds.

The protein localises to the nucleus. The protein resides in the nucleolus. In terms of biological role, involved in pre-rRNA processing and required for biogenesis of the large (60S) ribosomal subunit. Required for proper development. In Arabidopsis thaliana (Mouse-ear cress), this protein is Ribosome biogenesis protein BRX1 homolog 1.